The following is a 378-amino-acid chain: UPF0754 membrane protein BALH_0780 (378 aa).

The next 2 helical transmembrane spans lie at 1-21 (MNIWLSMLTTTGLGAIIGGFT) and 357-377 (YLGALLGGMIGIVQGLLLLFL).

It belongs to the UPF0754 family.

The protein resides in the cell membrane. In Bacillus thuringiensis (strain Al Hakam), this protein is UPF0754 membrane protein BALH_0780.